The primary structure comprises 153 residues: MAL-like protein (153 aa).

Transmembrane regions (helical) follow at residues 22 to 42, 59 to 79, 97 to 117, and 131 to 151; these read LFLTIPFAFFLPELIFGFLVW, VMYVSLTSFLISLMFLLSYLF, GTTGILYMSAAVLQVHATIVS, and AASFFAFIATLLYILHAFSIY. In terms of domain architecture, MARVEL spans 22–153; the sequence is LFLTIPFAFF…ILHAFSIYYH (132 aa).

It belongs to the MAL family.

It is found in the membrane. The protein is MAL-like protein (MALL) of Homo sapiens (Human).